The sequence spans 452 residues: Na(+)/H(+) antiporter NhaA (452 aa).

Helical transmembrane passes span 23–43 (MMLFLASVLAVIMANSSLSTI), 71–91 (LLQFVNDVLMVIFFLAVGLEI), 108–128 (LPIVGAIGGMIVPVLFFLLVV), 136–156 (GAAIPMSTDIAFALAALAVLG), 165–185 (VFLTALAVADDIGGIIVIALF), 189–209 (HINIGMLAIAFGILFIMYLMG), 216–236 (LGLYFVCTFFVWLFFLQSGIH), 316–336 (IVGYFVLPLFAFANAGITLGG), 349–369 (VFLGLFVGKPLGIYFFTYGFV), 385–405 (LMAVSLFGGIGFTVSLFIATL), and 418–438 (EAKLGIFVASIFAALVGIVTL).

This sequence belongs to the NhaA Na(+)/H(+) (TC 2.A.33) antiporter family.

Its subcellular location is the cell inner membrane. The enzyme catalyses Na(+)(in) + 2 H(+)(out) = Na(+)(out) + 2 H(+)(in). In terms of biological role, na(+)/H(+) antiporter that extrudes sodium in exchange for external protons. The sequence is that of Na(+)/H(+) antiporter NhaA from Porphyromonas gingivalis (strain ATCC BAA-308 / W83).